Here is a 241-residue protein sequence, read N- to C-terminus: uncharacterized protein (241 aa).

Residues 78–80 (TSA), G111, I131, and 138–140 (SSL) each bind S-adenosyl-L-methionine.

Belongs to the class IV-like SAM-binding methyltransferase superfamily. RNA methyltransferase TrmH family.

This is an uncharacterized protein from Haemophilus influenzae (strain ATCC 51907 / DSM 11121 / KW20 / Rd).